A 344-amino-acid chain; its full sequence is AA9 family lytic polysaccharide monooxygenase D (344 aa).

A signal peptide spans 1 to 23 (MKTATSYAAFLLSALAALPHASA). H24 provides a ligand contact to Cu(2+). A disulfide bond links C70 and C193. H179 is a binding site for O2. Cu(2+) is bound at residue Y190. N-linked (GlcNAc...) asparagine glycosylation is found at N201 and N207. The tract at residues 240–321 (PPLSNLVSGD…PTTSGNLSAN (82 aa)) is disordered. A compositionally biased stretch (low complexity) spans 259 to 292 (STSSATLSGGAAPTGTASGSTPAGTSQPSSTTGT). A compositionally biased stretch (polar residues) spans 311–320 (APTTSGNLSA). N-linked (GlcNAc...) asparagine glycosylation occurs at N317.

The protein belongs to the polysaccharide monooxygenase AA9 family. Requires Cu(2+) as cofactor.

It localises to the secreted. The catalysed reaction is [(1-&gt;4)-beta-D-glucosyl]n+m + reduced acceptor + O2 = 4-dehydro-beta-D-glucosyl-[(1-&gt;4)-beta-D-glucosyl]n-1 + [(1-&gt;4)-beta-D-glucosyl]m + acceptor + H2O.. Lytic polysaccharide monooxygenase (LPMO) that depolymerizes crystalline and amorphous polysaccharides via the oxidation of scissile alpha- or beta-(1-4)-glycosidic bonds, yielding C1 or C4 oxidation products. Catalysis by LPMOs requires the reduction of the active-site copper from Cu(II) to Cu(I) by a reducing agent and H(2)O(2) or O(2) as a cosubstrate. This is AA9 family lytic polysaccharide monooxygenase D from Gloeophyllum trabeum (strain ATCC 11539 / FP-39264 / Madison 617) (Brown rot fungus).